A 430-amino-acid polypeptide reads, in one-letter code: Transcription factor E2F1 (430 aa).

The segment at 62–103 (ATPQAPRPAPSAPRPALGRPPVKRRLDLETDHQYLAGSSGPF) is cyclin A:CDK2 binding. The interval 84–186 (KRRLDLETDH…KKSKNHIQWL (103 aa)) is interaction with BIRC2/c-IAP1. The segment at 95–123 (YLAGSSGPFRGRGRHPGKGVKSPGEKSRY) is disordered. The DNA-binding element occupies 105 to 189 (GRGRHPGKGV…KNHIQWLGSH (85 aa)). N6-acetyllysine occurs at positions 112, 115, and 120. A leucine-zipper region spans residues 148–169 (LNWAAEVLKVQKRRIYDITNVL). The DEF box motif lies at 153-189 (EVLKVQKRRIYDITNVLEGIQLIAKKSKNHIQWLGSH). Lys-180 bears the N6-methyllysine; by SETD7 mark. The segment at 187–375 (GSHTMVGIGK…QLSPLVAADS (189 aa)) is required for interaction with TRIM28. Residues 190–279 (TMVGIGKRLE…AVDSSETFQI (90 aa)) are dimerization. The interval 294–340 (PEESADGISPGKTSCQETSSGEDRTADSGPAGPPPSPPSTSPALDPS) is disordered. Residues 324-333 (AGPPPSPPST) are compositionally biased toward pro residues. The transactivation stretch occupies residues 361–430 (PMEEDQLSPL…DFGDLTPLDF (70 aa)). Ser-368 and Ser-396 each carry phosphoserine. The segment at 402-419 (LDYHFGLEEGEGIRDLFD) is RB1 binding. The residue at position 426 (Thr-426) is a Phosphothreonine.

The protein belongs to the E2F/DP family. In terms of assembly, component of the DRTF1/E2F transcription factor complex. Forms heterodimers with DP family members. The E2F1 complex binds specifically hypophosphorylated RB1, the interaction represses E2F1-driven transcription. During the cell cycle, RB1 becomes phosphorylated in mid-to-late G1 phase, detaches from the DRTF1/E2F complex, rendering E2F transcriptionally active. Interacts with TRRAP, which probably mediates its interaction with histone acetyltransferase complexes, leading to transcription activation. Binds TOPBP1 and EAPP. Interacts with ARID3A. Interacts with TRIM28; the interaction inhibits E2F1 acetylation through recruiting HDAC1 and represses its transcriptional activity. Interaction with KAT2B; the interaction acetylates E2F1 enhancing its DNA-binding and transcriptional activity. Interacts with BIRC2/c-IAP1 (via BIR domains). The complex TFDP1:E2F1 interacts with CEBPA; the interaction prevents CEBPA binding to target genes promoters and represses its transcriptional activity. Interacts with RRP1B. Interacts with HCFC1. Interacts with KMT2E; the interaction is probably indirect and is mediated via HCFC1. Interacts with DCAF5 and L3MBTL3; the interaction requires methylation at Lys-180 and is necessary to target E2F1 for ubiquitination by the CRL4-DCAF5 E3 ubiquitin ligase complex. In terms of processing, phosphorylated by CDK2 and cyclin A-CDK2 in the S-phase. Phosphorylation by CHEK2 stabilizes E2F1 upon DNA damage and regulates its effect on transcription and apoptosis. Phosphorylation at Ser-396 by GSK3B promotes interaction with USP11, leading to its deubiquitination and stabilization. Post-translationally, ubiquitinated via 'Lys-63'-linked ubiquitin, leading to its degradation. Deubiquitinated by USP11 following phosphorylation by GSK3B, promoting its stability. Acetylation stimulates DNA-binding. Enhanced under stress conditions such as DNA damage and inhibited by retinoblastoma protein RB1. Regulated by KAP1/TRIM28 which recruits HDAC1 to E2F1 resulting in deacetylation. Acetylated by P/CAF/KAT2B. In terms of processing, methylation at Lys-180 by SETD7 promotes E2F1 ubiquitin-dependent proteasomal degradation.

It localises to the nucleus. BIRC2/c-IAP1 stimulates its transcriptional activity. Functionally, transcription activator that binds DNA cooperatively with DP proteins through the E2 recognition site, 5'-TTTC[CG]CGC-3' found in the promoter region of a number of genes whose products are involved in cell cycle regulation or in DNA replication. The DRTF1/E2F complex functions in the control of cell-cycle progression from G1 to S phase. E2F1 binds preferentially RB1 in a cell-cycle dependent manner. It can mediate both cell proliferation and TP53/p53-dependent apoptosis. Blocks adipocyte differentiation by binding to specific promoters repressing CEBPA binding to its target gene promoters. Directly activates transcription of PEG10. Positively regulates transcription of RRP1B. The protein is Transcription factor E2F1 of Mus musculus (Mouse).